Consider the following 170-residue polypeptide: Adenine phosphoribosyltransferase (170 aa).

The protein belongs to the purine/pyrimidine phosphoribosyltransferase family. In terms of assembly, homodimer.

The protein resides in the cytoplasm. The catalysed reaction is AMP + diphosphate = 5-phospho-alpha-D-ribose 1-diphosphate + adenine. It functions in the pathway purine metabolism; AMP biosynthesis via salvage pathway; AMP from adenine: step 1/1. Functionally, catalyzes a salvage reaction resulting in the formation of AMP, that is energically less costly than de novo synthesis. The polypeptide is Adenine phosphoribosyltransferase (Bacillus cereus (strain G9842)).